The primary structure comprises 388 residues: UDP-N-acetylglucosamine--N-acetylmuramyl-(pentapeptide) pyrophosphoryl-undecaprenol N-acetylglucosamine transferase (388 aa).

Residues 42–44 (TGG), Asn159, Arg195, Ser223, Ile277, and Gln322 each bind UDP-N-acetyl-alpha-D-glucosamine.

Belongs to the glycosyltransferase 28 family. MurG subfamily.

Its subcellular location is the cell inner membrane. The enzyme catalyses di-trans,octa-cis-undecaprenyl diphospho-N-acetyl-alpha-D-muramoyl-L-alanyl-D-glutamyl-meso-2,6-diaminopimeloyl-D-alanyl-D-alanine + UDP-N-acetyl-alpha-D-glucosamine = di-trans,octa-cis-undecaprenyl diphospho-[N-acetyl-alpha-D-glucosaminyl-(1-&gt;4)]-N-acetyl-alpha-D-muramoyl-L-alanyl-D-glutamyl-meso-2,6-diaminopimeloyl-D-alanyl-D-alanine + UDP + H(+). The protein operates within cell wall biogenesis; peptidoglycan biosynthesis. Functionally, cell wall formation. Catalyzes the transfer of a GlcNAc subunit on undecaprenyl-pyrophosphoryl-MurNAc-pentapeptide (lipid intermediate I) to form undecaprenyl-pyrophosphoryl-MurNAc-(pentapeptide)GlcNAc (lipid intermediate II). The polypeptide is UDP-N-acetylglucosamine--N-acetylmuramyl-(pentapeptide) pyrophosphoryl-undecaprenol N-acetylglucosamine transferase (Albidiferax ferrireducens (strain ATCC BAA-621 / DSM 15236 / T118) (Rhodoferax ferrireducens)).